Reading from the N-terminus, the 181-residue chain is Sodium/potassium-transporting ATPase subunit beta-1-interacting protein 3 (181 aa).

The next 4 membrane-spanning stretches (helical) occupy residues 5 to 22 (TGRC…LVAL), 35 to 55 (APIL…FGTI), 62 to 82 (IVAY…IICF), and 151 to 171 (AVQI…ISVI).

The protein belongs to the NKAIN family. Interacts with atp1b1 C-terminus.

Its subcellular location is the cell membrane. The chain is Sodium/potassium-transporting ATPase subunit beta-1-interacting protein 3 (nkain3) from Xenopus tropicalis (Western clawed frog).